The sequence spans 392 residues: Xyloside xylosyltransferase 1 (392 aa).

Residues 1 to 19 (MGLLRGGAACARAMARLGA) lie on the Cytoplasmic side of the membrane. Residues 20-42 (LRSHYCALLLAAALAVCAFYYLG) traverse the membrane as a helical; Signal-anchor for type II membrane protein segment. Residues 43–392 (SGRETFSSAT…GNCNTPIPED (350 aa)) lie on the Lumenal side of the membrane. 103–105 (MFT) contacts UDP-alpha-D-xylose. Residue Asp-225 participates in Mn(2+) binding. Leu-226 lines the UDP-alpha-D-xylose pocket. Residue Asp-227 participates in Mn(2+) binding. The interaction with target proteins stretch occupies residues 262–265 (HTFW). Positions 289, 327, and 330 each coordinate UDP-alpha-D-xylose. Residues Gln-330 and Trp-359 each coordinate a glycoprotein. Cystine bridges form between Cys-349–Cys-374 and Cys-356–Cys-385. Mn(2+) is bound at residue His-382. Asn-384 is an a glycoprotein binding site.

The protein belongs to the glycosyltransferase 8 family. In terms of assembly, homodimer. Dimer formation may be essential for the retention in endoplasmic reticulum. The cofactor is Mg(2+). It depends on Mn(2+) as a cofactor.

The protein localises to the endoplasmic reticulum membrane. The catalysed reaction is 3-O-[alpha-D-xylosyl-(1-&gt;3)-beta-D-glucosyl]-L-seryl-[EGF-like domain protein] + UDP-alpha-D-xylose = 3-O-[alpha-D-xylosyl-(1-&gt;3)-alpha-D-xylosyl-(1-&gt;3)-beta-D-glucosyl]-L-seryl-[EGF-like domain protein] + UDP + H(+). In terms of biological role, alpha-1,3-xylosyltransferase, which elongates the O-linked xylose-glucose disaccharide attached to EGF-like repeats in the extracellular domain of target proteins by catalyzing the addition of the second xylose. Known targets include Notch proteins and coagulation factors, such as F9. The chain is Xyloside xylosyltransferase 1 (Xxylt1) from Mus musculus (Mouse).